The chain runs to 756 residues: LIM domain and actin-binding protein 1 (756 aa).

Met1 carries the post-translational modification N-acetylmethionine. Ser15 and Ser55 each carry phosphoserine. A compositionally biased stretch (basic and acidic residues) spans 44–56 (AAEEANMEKRRSN). Disordered regions lie at residues 44–183 (AAEE…SNKI) and 204–377 (QTKI…AVKK). A compositionally biased stretch (low complexity) spans 107 to 118 (EVASSSASGVEA). A Phosphoserine modification is found at Ser130. Positions 140 to 173 (RIKDTEHLKDHSAESKKMENCLAESRHEVGKPET) are enriched in basic and acidic residues. The Required for interaction with NPC1L1 motif lies at 164–166 (SRH). Phosphoserine is present on Ser221. Tyr225 carries the post-translational modification Phosphotyrosine. Residues Ser226 and Ser238 each carry the phosphoserine modification. Basic and acidic residues predominate over residues 245–254 (EKSESRRNLE). A Phosphoserine modification is found at Ser259. The span at 274–287 (VSKQSSSTNYTNEL) shows a compositional bias: polar residues. The span at 294-303 (IKTHKLEQKE) shows a compositional bias: basic and acidic residues. Phosphoserine is present on residues Ser339, Ser346, Ser358, Ser365, and Ser370. In terms of domain architecture, LIM zinc-binding spans 384–444 (ETCVECQKTV…KPHFNQLFKS (61 aa)). Lys435 carries the post-translational modification N6-succinyllysine. Position 486 is a phosphoserine (Ser486). Residues 489–509 (VEDAPIAKVGVLTASMEAKAS) are required for interaction with MYO5B. Residues 508–726 (ASSQLEKEDK…TTQKQKSQDV (219 aa)) are disordered. Residues 512 to 523 (LEKEDKPAETKK) show a composition bias toward basic and acidic residues. Residues 533 to 542 (ELSSSGSALE) are compositionally biased toward low complexity. Positions 552 to 563 (WPPEDEVSKPEA) are enriched in basic and acidic residues. Phosphoserine is present on residues Ser597, Ser600, Ser605, and Ser613. Over residues 627–637 (AERKQMEKASA) the composition is skewed to basic and acidic residues. Residues 638 to 651 (SEKNGSVGKTTWPS) are compositionally biased toward polar residues. Positions 652–667 (KESRGGEAAGRSKEVQ) are enriched in basic and acidic residues. Positions 691-721 (LQQQSPLEPKSKNWSSFADNTSAKEFTTQKQ) are enriched in polar residues. Phosphoserine occurs at positions 695, 723, and 738.

Interacts with NPC1L1; bridges NPC1L1 with MYO5B. Interacts with MYO5B; bridges MYO5B with NPC1L1. Interacts with PXN; this complex stabilizes actin dynamics. Interacts with F-actin and G-actin. Interacts with LUZP1 (via C-terminus); both proteins restrict ciliation and may work together to regulate this process. Binds RAB40B (GTP-bound); interaction influences LIMA1 subcellular localization in lamellipodia during cell migration. Post-translationally, phosphorylation of the C-terminal region by MAPK1/MAPK3 reduces its association with F-actin and contributes to actin filament reorganization and enhances cell motility. In terms of processing, ubiquitinated by the ECS(RAB40B) complex leading to its degradation. In terms of tissue distribution, widely expressed. Highest levels of isoform 2 are expressed in lung, spleen and small intestine. Isoform 2 is expressed at higher levels than isoform 1 in most tissues except liver, fat and kidney. Isoform 1 and isoform 2 are expressed at low levels in skeletal muscle, heart, stomach and lymph.

The protein resides in the cytoplasm. It localises to the cell junction. Its subcellular location is the focal adhesion. It is found in the cytoskeleton. The protein localises to the stress fiber. The protein resides in the cell membrane. It localises to the cell projection. Its subcellular location is the ruffle. It is found in the lamellipodium. Actin-binding protein involved in actin cytoskeleton regulation and dynamics. Increases the number and size of actin stress fibers and inhibits membrane ruffling. Inhibits actin filament depolymerization. Bundles actin filaments, delays filament nucleation and reduces formation of branched filaments. Acts as a negative regulator of primary cilium formation. Plays a role in cholesterol homeostasis. Influences plasma cholesterol levels through regulation of intestinal cholesterol absorption. May act as a scaffold protein by regulating NPC1L1 transportation, an essential protein for cholesterol absorption, to the plasma membrane by recruiting MYO5B to NPC1L1, and thus facilitates cholesterol uptake. The chain is LIM domain and actin-binding protein 1 from Sus scrofa (Pig).